A 912-amino-acid chain; its full sequence is DNA ligase 4 (912 aa).

Positions 276, 277, 278, 279, 283, 336, 350, 372, 432, 437, 454, and 456 each coordinate ATP. The active-site N6-AMP-lysine intermediate is the Lys278. Residue Glu336 coordinates Mg(2+). Residue Glu432 coordinates Mg(2+). The interval 615–625 is required for catalytic activity; sequence LASKHLYIDEY. BRCT domains are found at residues 659 to 748 and 809 to 912; these read KVSS…PAFM and CKLC…QFLI.

Belongs to the ATP-dependent DNA ligase family. Interacts with XRCC4; the LIG4-XRCC4 subcomplex has a 1:2 stoichiometry. Component of the core long-range non-homologous end joining (NHEJ) complex (also named DNA-PK complex) composed of PRKDC, LIG4, XRCC4, XRCC6/Ku70, XRCC5/Ku86 and NHEJ1/XLF. Additional component of the NHEJ complex includes PAXX. Following autophosphorylation, PRKDC dissociates from DNA, leading to formation of the short-range NHEJ complex, composed of LIG4, XRCC4, XRCC6/Ku70, XRCC5/Ku86 and NHEJ1/XLF. Mg(2+) serves as cofactor.

It localises to the nucleus. The catalysed reaction is ATP + (deoxyribonucleotide)n-3'-hydroxyl + 5'-phospho-(deoxyribonucleotide)m = (deoxyribonucleotide)n+m + AMP + diphosphate.. Functionally, DNA ligase involved in DNA non-homologous end joining (NHEJ); required for double-strand break (DSB) repair and V(D)J recombination. Catalyzes the NHEJ ligation step of the broken DNA during DSB repair by resealing the DNA breaks after the gap filling is completed. Joins single-strand breaks in a double-stranded polydeoxynucleotide in an ATP-dependent reaction. LIG4 is mechanistically flexible: it can ligate nicks as well as compatible DNA overhangs alone, while in the presence of XRCC4, it can ligate ends with 2-nucleotides (nt) microhomology and 1-nt gaps. Forms a subcomplex with XRCC4; the LIG4-XRCC4 subcomplex is responsible for the NHEJ ligation step and XRCC4 enhances the joining activity of LIG4. The sequence is that of DNA ligase 4 from Gallus gallus (Chicken).